We begin with the raw amino-acid sequence, 929 residues long: Lon protease homolog 2, peroxisomal (929 aa).

Residues 11–257 form the Lon N-terminal domain; the sequence is LPLVPLPKGS…RVVEILTRQL (247 aa). The disordered stretch occupies residues 302 to 325; sequence GLTPPGLSAGRNNDNDDKESNEVD. Residue 484–491 coordinates ATP; the sequence is GPPGVGKT. The 188-residue stretch at 727–914 folds into the Lon proteolytic domain; it reads HGRPGVVTGL…WEAIRQVWPD (188 aa). Residues Ser-820 and Lys-863 contribute to the active site. The short motif at 927-929 is the Microbody targeting signal element; it reads SRL.

Belongs to the peptidase S16 family.

Its subcellular location is the peroxisome matrix. The catalysed reaction is Hydrolysis of proteins in presence of ATP.. Functionally, ATP-dependent serine protease that mediates the selective degradation of misfolded and unassembled polypeptides in the peroxisomal matrix. Necessary for type 2 peroxisome targeting signal (PTS2)-containing protein processing and facilitates peroxisome matrix protein import. The polypeptide is Lon protease homolog 2, peroxisomal (Aspergillus niger (strain ATCC MYA-4892 / CBS 513.88 / FGSC A1513)).